The chain runs to 638 residues: E3 ubiquitin-protein ligase TRIM47 (638 aa).

An N-acetylmethionine modification is found at Met1. Residues 9-58 (CPICLEPLREPVTLPCGHNFCLACLGALWPHRGASGAGGPGGAARCPLCQ) form an RING-type zinc finger. Phosphothreonine is present on Thr72. A disordered region spans residues 79–119 (LRQGSGPGSGPGPAPALAPEPSAPSALPSVPEPSAPCAPEP). 2 stretches are compositionally biased toward pro residues: residues 88–100 (GPGP…PEPS) and 108–119 (VPEPSAPCAPEP). The segment at 177–217 (LEESLCPRHLRPLERYCRAERVCLCEACAAQEHRGHELVPL) adopts a B box-type zinc-finger fold. Residues Cys182, His185, Cys204, and His209 each coordinate Zn(2+). A coiled-coil region spans residues 296–324 (MLGRSQGDLRRQEEQRSRLSRARQNLSQV). 2 disordered regions span residues 300–322 (SQGD…QNLS) and 384–411 (LRGP…LEST). A compositionally biased stretch (basic and acidic residues) spans 302–312 (GDLRRQEEQRS). The region spanning 410–631 (STNLLESEAP…LQIGPLKKSC (222 aa)) is the B30.2/SPRY domain. Position 461 is a phosphoserine (Ser461). Position 582 is an omega-N-methylarginine (Arg582). Position 588 is a phosphoserine (Ser588).

This sequence belongs to the TRIM/RBCC family. As to expression, low expression in most tissues. Higher expression in kidney tubular cells. Overexpressed in astrocytoma tumor cells.

It is found in the cytoplasm. The protein resides in the nucleus. The enzyme catalyses S-ubiquitinyl-[E2 ubiquitin-conjugating enzyme]-L-cysteine + [acceptor protein]-L-lysine = [E2 ubiquitin-conjugating enzyme]-L-cysteine + N(6)-ubiquitinyl-[acceptor protein]-L-lysine.. It participates in protein modification; protein ubiquitination. Functionally, E3 ubiquitin-protein ligase that mediates the ubiquitination and proteasomal degradation of CYLD. The sequence is that of E3 ubiquitin-protein ligase TRIM47 from Homo sapiens (Human).